The chain runs to 442 residues: Protein translocase subunit SecY (442 aa).

The next 10 membrane-spanning stretches (helical) occupy residues F24–N44, I76–A96, V125–F145, F149–L169, V178–I198, I212–I232, V269–F289, N312–F332, G363–P383, and F385–V405.

The protein belongs to the SecY/SEC61-alpha family. Component of the Sec protein translocase complex. Heterotrimer consisting of SecY, SecE and SecG subunits. The heterotrimers can form oligomers, although 1 heterotrimer is thought to be able to translocate proteins. Interacts with the ribosome. Interacts with SecDF, and other proteins may be involved. Interacts with SecA.

The protein resides in the cell inner membrane. Functionally, the central subunit of the protein translocation channel SecYEG. Consists of two halves formed by TMs 1-5 and 6-10. These two domains form a lateral gate at the front which open onto the bilayer between TMs 2 and 7, and are clamped together by SecE at the back. The channel is closed by both a pore ring composed of hydrophobic SecY resides and a short helix (helix 2A) on the extracellular side of the membrane which forms a plug. The plug probably moves laterally to allow the channel to open. The ring and the pore may move independently. This Pseudomonas aeruginosa (strain ATCC 15692 / DSM 22644 / CIP 104116 / JCM 14847 / LMG 12228 / 1C / PRS 101 / PAO1) protein is Protein translocase subunit SecY.